The chain runs to 957 residues: Calsyntenin-3 (957 aa).

The first 19 residues, 1–19 (MTPLLFPLLLASLLPSSSC), serve as a signal peptide directing secretion. The Extracellular segment spans residues 20–848 (NKANKHKPWI…SHRNSMVPSA (829 aa)). Cadherin domains lie at 29-145 (IEAE…APVF) and 146-246 (VERL…KPSW). Residues asparagine 299, asparagine 347, and asparagine 508 are each glycosylated (N-linked (GlcNAc...) asparagine). Residues 849–869 (ATLIIVVCVGFLVLMVVLGLV) traverse the membrane as a helical segment. The Cytoplasmic segment spans residues 870-957 (RIHSLHRRVS…RIIETPPHRY (88 aa)). The segment at 919 to 957 (CVAGAAGGQQDDEDSSDSEAADSPSSDERRIIETPPHRY) is disordered. Residues 928 to 938 (QDDEDSSDSEA) show a composition bias toward acidic residues. Residues 944 to 957 (SDERRIIETPPHRY) show a composition bias toward basic and acidic residues.

It belongs to the calsyntenin family. As to quaternary structure, interacts (via cadherin domains) with both alpha and beta isoforms of neurexins (NRXN1, NRXN2 and NRXN3). Directly interacts with APBA2. Forms a tripartite complex with APBA2 and APP. Interacts with low affinity with KLC1. Interacts with SLC23A2/SVCT2. Post-translationally, proteolytically processed under normal cellular conditions. A primary zeta-cleavage generates a large extracellular (soluble) N-terminal domain (sAlc) and a short C-terminal transmembrane fragment (CTF1). A secondary cleavage catalyzed by gamma-secretase within the transmembrane domain releases the beta-Alc-beta chain in the extracellular milieu and produces an intracellular fragment (AlcICD). This processing is strongly suppressed in the tripartite complex formed with APBA2 and APP, which seems to prevent the association with gamma-secretase.

It localises to the postsynaptic cell membrane. Its subcellular location is the endoplasmic reticulum membrane. The protein localises to the golgi apparatus membrane. The protein resides in the cell projection. It is found in the dendrite. Its function is as follows. Postsynaptic adhesion molecule that binds to presynaptic neurexins to mediate both excitatory and inhibitory synapse formation. Promotes synapse development by acting as a cell adhesion molecule at the postsynaptic membrane, which associates with both neurexin-alpha and neurexin-beta proteins at the presynaptic membrane. Regulates the balance between excitatory and inhibitory synapses by inhibiting formation of excitatory parallel-fiber synapses and promoting formation of inhibitory synapses in the same neuron. May also be involved in ascorbate (vitamin C) uptake via its interaction with SLC23A2/SVCT2. Complex formation with APBA2 and APP, stabilizes APP metabolism and enhances APBA2-mediated suppression of beta-APP40 secretion, due to the retardation of intracellular APP maturation. In Bos taurus (Bovine), this protein is Calsyntenin-3 (CLSTN3).